The following is a 1640-amino-acid chain: Basal body protein 10 (1640 aa).

Residues valine 11–phenylalanine 64 are homodimerization. The stretch at alanine 93–leucine 148 forms a coiled coil. Positions serine 154–glutamine 185 are disordered. Residues valine 174–proline 183 are compositionally biased toward pro residues. Coiled coils occupy residues leucine 191–glutamate 232, isoleucine 260–threonine 332, valine 370–arginine 411, phenylalanine 461–aspartate 722, alanine 758–alanine 960, glycine 1010–glutamate 1030, arginine 1059–glutamate 1086, isoleucine 1129–serine 1282, alanine 1323–aspartate 1494, and alanine 1523–threonine 1557. The segment covering glycine 1592–alanine 1618 has biased composition (low complexity). Residues glycine 1592–arginine 1640 are disordered. Residues glutamine 1619 to serine 1631 show a composition bias toward gly residues.

This sequence belongs to the CEP135/TSGA10 family. In terms of assembly, homodimer.

It localises to the cytoplasm. The protein resides in the cytoskeleton. Its subcellular location is the microtubule organizing center. The protein localises to the centrosome. It is found in the centriole. Microtubule-binding protein essential for cytoskeletal organization (e.g. rootlet microtubule bundles) and flagellar basal body/centriole assembly. This chain is Basal body protein 10, found in Chlamydomonas reinhardtii (Chlamydomonas smithii).